Here is a 460-residue protein sequence, read N- to C-terminus: MVNLGNAVRSLLMHLIGLLVWQFDISISPVAAIVTDTFNSSDGGRLFQFPDGVQNWPALSIVVIIIMTIGGNILVIMAVSMEKKLHNATNYFLMSLAIADMLVGLLVMPLSLLAILYDYVWPLPRYLCPVWISLDVLFSTASIMHLCAISLDRYVAIRNPIEHSRFNSRTKAIMKIAIVWAISIGVSVPIPVIGLRDESKVFVNNTTCVLNDPNFVLIGSFVAFFIPLTIMVITYFLTIYVLRRQTLMLLRGHTEEELANMSLNFLNCCCKKNGGEEENAPNPNPDQKPRRKKKEKRPRGTMQAINNEKKASKVLGIVFFVFLIMWCPFFITNILSVLCGKACNQKLMEKLLNVFVWIGYVCSGINPLVYTLFNKIYRRAFSKYLRCDYKPDKKPPVRQIPRVAATALSGRELNVNIYRHTNERVARKANDPEPGIEMQVENLELPVNPSNVVSERISSV.

The first 32 residues, 1–32 (MVNLGNAVRSLLMHLIGLLVWQFDISISPVAA), serve as a signal peptide directing secretion. The Extracellular portion of the chain corresponds to 33–56 (IVTDTFNSSDGGRLFQFPDGVQNW). Residues 57–81 (PALSIVVIIIMTIGGNILVIMAVSM) traverse the membrane as a helical segment. At 82-87 (EKKLHN) the chain is on the cytoplasmic side. The helical transmembrane segment at 88-112 (ATNYFLMSLAIADMLVGLLVMPLSL) threads the bilayer. Residues 113-129 (LAILYDYVWPLPRYLCP) are Extracellular-facing. A disulfide bridge connects residues Cys-128 and Cys-208. The helical transmembrane segment at 130-152 (VWISLDVLFSTASIMHLCAISLD) threads the bilayer. Position 140 (Thr-140) interacts with ergotamine. The DRY motif; important for ligand-induced conformation changes motif lies at 152-154 (DRY). Residues 153–168 (RYVAIRNPIEHSRFNS) lie on the Cytoplasmic side of the membrane. A helical transmembrane segment spans residues 169 to 190 (RTKAIMKIAIVWAISIGVSVPI). Over 191-214 (PVIGLRDESKVFVNNTTCVLNDPN) the chain is Extracellular. Asn-204 and Asn-205 each carry an N-linked (GlcNAc...) asparagine glycan. Leu-210 is a binding site for ergotamine. A helical membrane pass occupies residues 215 to 237 (FVLIGSFVAFFIPLTIMVITYFL). Over 238-313 (TIYVLRRQTL…AINNEKKASK (76 aa)) the chain is Cytoplasmic. The tract at residues 276-301 (EEENAPNPNPDQKPRRKKKEKRPRGT) is disordered. Residues 289–299 (PRRKKKEKRPR) are compositionally biased toward basic residues. The chain crosses the membrane as a helical span at residues 314–338 (VLGIVFFVFLIMWCPFFITNILSVL). Cys-339 and Cys-343 are oxidised to a cystine. Over 339-349 (CGKACNQKLME) the chain is Extracellular. Residues 350-372 (KLLNVFVWIGYVCSGINPLVYTL) form a helical membrane-spanning segment. The NPxxY motif; important for ligand-induced conformation changes and signaling signature appears at 366-370 (NPLVY). Residues 373 to 460 (FNKIYRRAFS…NVVSERISSV (88 aa)) lie on the Cytoplasmic side of the membrane. The PDZ-binding motif lies at 458–460 (SSV).

This sequence belongs to the G-protein coupled receptor 1 family. Interacts with MPDZ. Interacts with ARRB2. Interacts with MPP3; this interaction stabilizes the receptor at the plasma membrane and prevents the desensitization of the HTR2C receptor-mediated calcium response.

Its subcellular location is the cell membrane. Functionally, G-protein coupled receptor for 5-hydroxytryptamine (serotonin). Also functions as a receptor for various drugs and psychoactive substances, including ergot alkaloid derivatives, 1-2,5,-dimethoxy-4-iodophenyl-2-aminopropane (DOI) and lysergic acid diethylamide (LSD). Ligand binding causes a conformation change that triggers signaling via guanine nucleotide-binding proteins (G proteins) and modulates the activity of downstream effectors. HTR2C is coupled to G(q)/G(11) G alpha proteins and activates phospholipase C-beta, releasing diacylglycerol (DAG) and inositol 1,4,5-trisphosphate (IP3) second messengers that modulate the activity of phosphatidylinositol 3-kinase and promote the release of Ca(2+) ions from intracellular stores, respectively. Beta-arrestin family members inhibit signaling via G proteins and mediate activation of alternative signaling pathways. Regulates neuronal activity via the activation of short transient receptor potential calcium channels in the brain, and thereby modulates the activation of pro-opiomelanocortin neurons and the release of CRH that then regulates the release of corticosterone. Plays a role in the regulation of appetite and eating behavior, responses to anxiogenic stimuli and stress. Plays a role in insulin sensitivity and glucose homeostasis. In Rattus norvegicus (Rat), this protein is 5-hydroxytryptamine receptor 2C.